The primary structure comprises 935 residues: ABC transporter A family member 7 (935 aa).

Transmembrane regions (helical) follow at residues 34–54 (LIMI…LFDT), 338–358 (IASL…FPVI), 392–412 (FLTI…AIGL), 424–444 (FVFY…VSSV), 454–474 (ASYI…NFLI), 483–503 (WIIV…YELA), and 528–548 (DDVF…AYYI). The tract at residues 571 to 591 (SLRRPSLQRQGSKVSVDMEKP) is disordered. Residues 613–850 (IVCDNLKKVY…YGGSYVFTMT (238 aa)) enclose the ABC transporter domain. An ATP-binding site is contributed by 651–658 (GPNGAGKT).

Belongs to the ABC transporter superfamily. ABCA family. CPR flippase (TC 3.A.1.211) subfamily.

Its subcellular location is the membrane. The sequence is that of ABC transporter A family member 7 (ABCA7) from Arabidopsis thaliana (Mouse-ear cress).